Reading from the N-terminus, the 644-residue chain is Far upstream element-binding protein 1 (644 aa).

Disordered stretches follow at residues 1 to 31 (MADYSTVPPPSSGSAGGGGGGGGGGGVNDAF) and 44 to 94 (KIGG…PMHQ). N-acetylalanine is present on Ala-2. Residues 14-27 (SAGGGGGGGGGGGV) show a composition bias toward gly residues. Ser-52 and Ser-55 each carry phosphoserine. Basic and acidic residues predominate over residues 65-77 (RPLEDGDQPDAKK). Polar residues predominate over residues 81–94 (QNDSFGTQLPPMHQ). 3 KH domains span residues 100–164 (VMTE…KRLL), 185–251 (NAVQ…KEMV), and 275–339 (NEGI…AEII). Ser-140 is subject to Phosphoserine. Phosphothreonine is present on Thr-153. An omega-N-methylarginine mark is found at Arg-321, Arg-359, Arg-361, and Arg-363. The interval 346–365 (VQAGNPGGPGPGGRGRGRGQ) is disordered. Gly residues predominate over residues 350-365 (NPGGPGPGGRGRGRGQ). The KH 4 domain maps to 376-443 (LQEFNFIVPT…QQIDYARQLI (68 aa)). Thr-432 carries the post-translational modification Phosphothreonine. Disordered regions lie at residues 447–532 (IGGP…GTDP) and 548–580 (QAQPPPAAPAGAPTTTQTNGQGDQQNPAPAGQV). Pro residues predominate over residues 468–505 (PHGPPGPPGPGTPMGPYNPAPYNPGPPGPAPHGPPAPY). The segment covering 556 to 573 (PAGAPTTTQTNGQGDQQN) has biased composition (low complexity). Ser-630 is subject to Phosphoserine.

As to quaternary structure, found in a complex with PUF60 and far upstream element (FUSE) DNA segment. Interacts with PUF60 and JTV1. Ubiquitinated. This targets the protein for proteasome-mediated degradation.

It localises to the nucleus. Functionally, regulates MYC expression by binding to a single-stranded far-upstream element (FUSE) upstream of the MYC promoter. May act both as activator and repressor of transcription. The polypeptide is Far upstream element-binding protein 1 (FUBP1) (Homo sapiens (Human)).